The following is a 157-amino-acid chain: Transcription elongation factor GreA (157 aa).

The stretch at 14–37 forms a coiled coil; it reads LREELDRLLKLRPKITEAIAEARE.

Belongs to the GreA/GreB family.

Necessary for efficient RNA polymerase transcription elongation past template-encoded arresting sites. The arresting sites in DNA have the property of trapping a certain fraction of elongating RNA polymerases that pass through, resulting in locked ternary complexes. Cleavage of the nascent transcript by cleavage factors such as GreA or GreB allows the resumption of elongation from the new 3'terminus. GreA releases sequences of 2 to 3 nucleotides. In Vibrio cholerae serotype O1 (strain ATCC 39315 / El Tor Inaba N16961), this protein is Transcription elongation factor GreA.